Here is a 180-residue protein sequence, read N- to C-terminus: UPF0743 protein C215.06c (180 aa).

2 consecutive C2HC LYAR-type zinc fingers follow at residues 1–26 and 27–51; these read MVSF…SRCH and GAYF…TSCM. Zn(2+) is bound by residues C6, C9, H21, C25, C32, C35, H47, and C50. The interval 61–125 is disordered; that stretch reads LYRPTKKELK…KETVSSPAEQ (65 aa). Polar residues predominate over residues 77–95; sequence NAVNSKELSPNTDNQNTPA. A Phosphoserine modification is found at S85. Positions 100–111 are enriched in basic and acidic residues; sequence HSLDENEKDKEN.

The protein belongs to the UPF0743 family.

It localises to the nucleus. In Schizosaccharomyces pombe (strain 972 / ATCC 24843) (Fission yeast), this protein is UPF0743 protein C215.06c.